A 370-amino-acid chain; its full sequence is NADH-quinone oxidoreductase subunit D (370 aa).

Belongs to the complex I 49 kDa subunit family. NDH-1 is composed of 14 different subunits. Subunits NuoB, C, D, E, F, and G constitute the peripheral sector of the complex.

It localises to the cell membrane. It catalyses the reaction a quinone + NADH + 5 H(+)(in) = a quinol + NAD(+) + 4 H(+)(out). Functionally, NDH-1 shuttles electrons from NADH, via FMN and iron-sulfur (Fe-S) centers, to quinones in the respiratory chain. The immediate electron acceptor for the enzyme in this species is believed to be a menaquinone. Couples the redox reaction to proton translocation (for every two electrons transferred, four hydrogen ions are translocated across the cytoplasmic membrane), and thus conserves the redox energy in a proton gradient. The sequence is that of NADH-quinone oxidoreductase subunit D from Desulfitobacterium hafniense (strain Y51).